The sequence spans 145 residues: Small ribosomal subunit protein bS6 (145 aa).

Positions 113–132 are enriched in basic and acidic residues; sequence ENMKKNERKAPKEPVKKDEE. A disordered region spans residues 113–145; sequence ENMKKNERKAPKEPVKKDEEENKESEEEITSEE. Residues 133–145 show a composition bias toward acidic residues; it reads ENKESEEEITSEE.

The protein belongs to the bacterial ribosomal protein bS6 family.

Binds together with bS18 to 16S ribosomal RNA. This Campylobacter hominis (strain ATCC BAA-381 / DSM 21671 / CCUG 45161 / LMG 19568 / NCTC 13146 / CH001A) protein is Small ribosomal subunit protein bS6.